Reading from the N-terminus, the 155-residue chain is 6,7-dimethyl-8-ribityllumazine synthase (155 aa).

5-amino-6-(D-ribitylamino)uracil contacts are provided by residues phenylalanine 24, alanine 58–glutamate 60, and alanine 82–isoleucine 84. Serine 87–threonine 88 is a binding site for (2S)-2-hydroxy-3-oxobutyl phosphate. Histidine 90 (proton donor) is an active-site residue. Phenylalanine 115 is a binding site for 5-amino-6-(D-ribitylamino)uracil. Arginine 129 contributes to the (2S)-2-hydroxy-3-oxobutyl phosphate binding site.

The protein belongs to the DMRL synthase family.

The catalysed reaction is (2S)-2-hydroxy-3-oxobutyl phosphate + 5-amino-6-(D-ribitylamino)uracil = 6,7-dimethyl-8-(1-D-ribityl)lumazine + phosphate + 2 H2O + H(+). It functions in the pathway cofactor biosynthesis; riboflavin biosynthesis; riboflavin from 2-hydroxy-3-oxobutyl phosphate and 5-amino-6-(D-ribitylamino)uracil: step 1/2. Catalyzes the formation of 6,7-dimethyl-8-ribityllumazine by condensation of 5-amino-6-(D-ribitylamino)uracil with 3,4-dihydroxy-2-butanone 4-phosphate. This is the penultimate step in the biosynthesis of riboflavin. The protein is 6,7-dimethyl-8-ribityllumazine synthase of Chlorobium luteolum (strain DSM 273 / BCRC 81028 / 2530) (Pelodictyon luteolum).